The sequence spans 890 residues: Protein translocase subunit SecA (890 aa).

ATP-binding positions include Gln-85, 103 to 107 (GEGKT), and Asp-491.

It belongs to the SecA family. In terms of assembly, monomer and homodimer. Part of the essential Sec protein translocation apparatus which comprises SecA, SecYEG and auxiliary proteins SecDF. Other proteins may also be involved.

The protein localises to the cell membrane. Its subcellular location is the cytoplasm. The enzyme catalyses ATP + H2O + cellular proteinSide 1 = ADP + phosphate + cellular proteinSide 2.. Functionally, part of the Sec protein translocase complex. Interacts with the SecYEG preprotein conducting channel. Has a central role in coupling the hydrolysis of ATP to the transfer of proteins into and across the cell membrane, serving as an ATP-driven molecular motor driving the stepwise translocation of polypeptide chains across the membrane. The protein is Protein translocase subunit SecA of Mycoplasmoides gallisepticum (strain R(low / passage 15 / clone 2)) (Mycoplasma gallisepticum).